We begin with the raw amino-acid sequence, 407 residues long: Schlafen-like protein 1 (407 aa).

2 disordered regions span residues 1 to 28 (MTPM…LPEL) and 137 to 191 (AQGP…CQGR). Low complexity predominate over residues 155–167 (GLSPGPSPGSGVP). The segment covering 181 to 190 (QAQQLQSCQG) has biased composition (polar residues). Residue 261–268 (GVEDSGLV) coordinates ATP. A coiled-coil region spans residues 366-398 (RQRWLVELGKLEEKMKALMMEKEQLQQQLQQHG).

Belongs to the Schlafen family. Subgroup I subfamily.

The polypeptide is Schlafen-like protein 1 (SLFNL1) (Homo sapiens (Human)).